The chain runs to 458 residues: Ribulose bisphosphate carboxylase (458 aa).

Asparagine 111 provides a ligand contact to substrate. Lysine 166 (proton acceptor) is an active-site residue. Position 168 (lysine 168) interacts with substrate. Mg(2+)-binding residues include lysine 191, aspartate 193, and glutamate 194. An N6-carboxylysine modification is found at lysine 191. The active-site Proton acceptor is the histidine 287. Positions 288, 321, and 368 each coordinate substrate.

Belongs to the RuBisCO large chain family. Type II subfamily. Homodimer. The cofactor is Mg(2+).

The enzyme catalyses 2 (2R)-3-phosphoglycerate + 2 H(+) = D-ribulose 1,5-bisphosphate + CO2 + H2O. The catalysed reaction is D-ribulose 1,5-bisphosphate + O2 = 2-phosphoglycolate + (2R)-3-phosphoglycerate + 2 H(+). Its function is as follows. RuBisCO catalyzes two reactions: the carboxylation of D-ribulose 1,5-bisphosphate, the primary event in carbon dioxide fixation, as well as the oxidative fragmentation of the pentose substrate. Both reactions occur simultaneously and in competition at the same active site. The protein is Ribulose bisphosphate carboxylase (cbbM) of Rhodobacter capsulatus (strain ATCC BAA-309 / NBRC 16581 / SB1003).